The primary structure comprises 242 residues: Probable transcriptional regulatory protein BURPS1710b_1385 (242 aa).

It belongs to the TACO1 family.

The protein localises to the cytoplasm. This Burkholderia pseudomallei (strain 1710b) protein is Probable transcriptional regulatory protein BURPS1710b_1385.